The following is a 133-amino-acid chain: Transmembrane protein 60 (133 aa).

4 helical membrane-spanning segments follow: residues 5–25, 35–55, 78–98, and 110–130; these read LAQR…MLVL, WFLI…LLIV, AWYL…CAKL, and FIPL…NVFF.

It localises to the membrane. The sequence is that of Transmembrane protein 60 (TMEM60) from Homo sapiens (Human).